Consider the following 106-residue polypeptide: Late cornified envelope protein 2A (106 aa).

The span at Met1–Cys10 shows a compositional bias: low complexity. The interval Met1 to Pro25 is disordered. Residues Gln11–Pro25 are compositionally biased toward pro residues.

This sequence belongs to the LCE family. In terms of assembly, interacts with CYSRT1. In terms of tissue distribution, skin-specific. Expression was readily detected in adult trunk skin, adult arm skin, fetal skin, penal skin, vulva, esophagus and tongue. Not expressed in the cervix, rectum, lung, colon, or placenta.

Its function is as follows. Precursors of the cornified envelope of the stratum corneum. The protein is Late cornified envelope protein 2A (LCE2A) of Homo sapiens (Human).